The primary structure comprises 391 residues: Elongation factor Tu (391 aa).

The 192-residue stretch at 10–201 (KPHVNIGTIG…AVDSYIPTPE (192 aa)) folds into the tr-type G domain. The G1 stretch occupies residues 19–26 (GHVDHGKT). Residue 19 to 26 (GHVDHGKT) participates in GTP binding. Thr26 provides a ligand contact to Mg(2+). The tract at residues 55 to 59 (GITIS) is G2. Residues 76 to 79 (DCPG) are G3. GTP-binding positions include 76–80 (DCPGH) and 131–134 (NKCD). The tract at residues 131–134 (NKCD) is G4. The segment at 169–171 (SAL) is G5.

The protein belongs to the TRAFAC class translation factor GTPase superfamily. Classic translation factor GTPase family. EF-Tu/EF-1A subfamily. In terms of assembly, monomer.

The protein resides in the cytoplasm. The enzyme catalyses GTP + H2O = GDP + phosphate + H(+). In terms of biological role, GTP hydrolase that promotes the GTP-dependent binding of aminoacyl-tRNA to the A-site of ribosomes during protein biosynthesis. The chain is Elongation factor Tu from Brucella canis (strain ATCC 23365 / NCTC 10854 / RM-666).